The following is a 77-amino-acid chain: uncharacterized protein (77 aa).

2 helical membrane passes run 22–42 (VFANGIILITAYYLVFELPVG) and 44–64 (LIGLYIIMFVVWLLVSMFFLG).

The protein localises to the cell membrane. This is an uncharacterized protein from Methanocaldococcus jannaschii (strain ATCC 43067 / DSM 2661 / JAL-1 / JCM 10045 / NBRC 100440) (Methanococcus jannaschii).